Consider the following 510-residue polypeptide: 2,3-bisphosphoglycerate-independent phosphoglycerate mutase (510 aa).

Mn(2+)-binding residues include Asp-12 and Ser-62. The active-site Phosphoserine intermediate is the Ser-62. Substrate-binding positions include His-123, 153–154 (RD), Arg-185, Arg-191, 260–263 (RPDR), and Lys-333. Mn(2+) contacts are provided by Asp-400, His-404, Asp-441, His-442, and His-460.

It belongs to the BPG-independent phosphoglycerate mutase family. As to quaternary structure, monomer. It depends on Mn(2+) as a cofactor.

It carries out the reaction (2R)-2-phosphoglycerate = (2R)-3-phosphoglycerate. It participates in carbohydrate degradation; glycolysis; pyruvate from D-glyceraldehyde 3-phosphate: step 3/5. In terms of biological role, catalyzes the interconversion of 2-phosphoglycerate and 3-phosphoglycerate. The chain is 2,3-bisphosphoglycerate-independent phosphoglycerate mutase from Clostridium acetobutylicum (strain ATCC 824 / DSM 792 / JCM 1419 / IAM 19013 / LMG 5710 / NBRC 13948 / NRRL B-527 / VKM B-1787 / 2291 / W).